Consider the following 160-residue polypeptide: UPF0262 protein BSUIS_A0274 (160 aa).

It belongs to the UPF0262 family.

The polypeptide is UPF0262 protein BSUIS_A0274 (Brucella suis (strain ATCC 23445 / NCTC 10510)).